The primary structure comprises 1072 residues: DNA-directed RNA polymerase subunit beta (1072 aa).

The protein belongs to the RNA polymerase beta chain family. As to quaternary structure, in plastids the minimal PEP RNA polymerase catalytic core is composed of four subunits: alpha, beta, beta', and beta''. When a (nuclear-encoded) sigma factor is associated with the core the holoenzyme is formed, which can initiate transcription.

Its subcellular location is the plastid. The protein resides in the chloroplast. The catalysed reaction is RNA(n) + a ribonucleoside 5'-triphosphate = RNA(n+1) + diphosphate. Functionally, DNA-dependent RNA polymerase catalyzes the transcription of DNA into RNA using the four ribonucleoside triphosphates as substrates. This is DNA-directed RNA polymerase subunit beta from Lemna minor (Common duckweed).